We begin with the raw amino-acid sequence, 61 residues long: Translational regulator CsrA (61 aa).

It belongs to the CsrA/RsmA family. As to quaternary structure, homodimer; the beta-strands of each monomer intercalate to form a hydrophobic core, while the alpha-helices form wings that extend away from the core.

It is found in the cytoplasm. Its function is as follows. A key translational regulator that binds mRNA to regulate translation initiation and/or mRNA stability. Mediates global changes in gene expression, shifting from rapid growth to stress survival by linking envelope stress, the stringent response and the catabolite repression systems. Usually binds in the 5'-UTR; binding at or near the Shine-Dalgarno sequence prevents ribosome-binding, repressing translation, binding elsewhere in the 5'-UTR can activate translation and/or stabilize the mRNA. Its function is antagonized by small RNA(s). The chain is Translational regulator CsrA from Glaesserella parasuis serovar 5 (strain SH0165) (Haemophilus parasuis).